Consider the following 506-residue polypeptide: Aminoaldehyde dehydrogenase 2 (506 aa).

Asp101 lines the Na(+) pocket. NAD(+) is bound by residues 161–163 (TPW) and 187–190 (KPSE). A Na(+)-binding site is contributed by Leu191. NAD(+)-binding positions include 241-244 (STET) and Glu262. The active-site Proton acceptor is Glu262. Catalysis depends on Cys297, which acts as the Nucleophile. Glu396 and Trp462 together coordinate NAD(+).

Belongs to the aldehyde dehydrogenase family.

It catalyses the reaction 4-aminobutanal + NAD(+) + H2O = 4-aminobutanoate + NADH + 2 H(+). The catalysed reaction is 3-aminopropanal + NAD(+) + H2O = beta-alanine + NADH + 2 H(+). It carries out the reaction 4-(trimethylamino)butanal + NAD(+) + H2O = 4-(trimethylamino)butanoate + NADH + 2 H(+). The enzyme catalyses 4-guanidinobutanal + NAD(+) + H2O = 4-guanidinobutanoate + NADH + 2 H(+). It functions in the pathway amine and polyamine biosynthesis; betaine biosynthesis via choline pathway; betaine from betaine aldehyde: step 1/1. Its function is as follows. Dehydrogenase that catalyzes the oxidation of several aminoaldehydes. Metabolizes and detoxifies aldehyde products of polyamine degradation to non-toxic amino acids. Catalyzes the oxidation of 4-aminobutanal and 3-aminopropanal to 4-aminobutanoate and beta-alanine, respectively. Catalyzes the oxidation of 4-(trimethylamino)butanal and 4-guanidinobutanal to 4-trimethylammoniobutanoate and 4-guanidinobutanoate, respectively. This chain is Aminoaldehyde dehydrogenase 2, found in Zea mays (Maize).